The chain runs to 719 residues: MSKSNNVAPPCRQDQLGFVPAGYDSDNNSEDEMLMVMPNASTSSGESGRCFDDERIKIVPHIGWRAGIGDRDFDIELDENIANWFEGFRDSFKTFKKGPLISQRLQMFYMNTRNPYEWSLKLFANCPDHNSPKSNSLAYTVLEEMRNFKKHYNLGTDQLVDDNLRMVAFNFVAKQGHCLLFRMVVDIFEFLQCRDLFIPKVREMIARKQYKEAGQIAIDLELFEEFDEHDFVMPLFMQDKISIAEDYLNKAERLQGPVVQLLDSFFDKRQSVESHCSRYITEHEVTDVYYSKLHQKPLSKLVQRLAKNYNIPRQFTPNVNKMKNFGALQFLVHKRYYEKSLNKDSWDEMVRDTVSETDRELQLELVCLCSNFNDQPEAAKWAFHYQLKRSDLPLLVQDYILEQEGNKQAPRTDFDDEQWDAPDSEPAHTLRLDESHVHLVDSKDKFYAMLSDLCRQSMIAFDSEWKPTFGGANEVSLIQLATWDDVYMIDVMVSQLEPLDWAALAKNVFNRDDVLKLSFAPSTDISMFQKALPSFNVMYSSQSTSAILDLQLLWRHVERFDSFRFPYHEESVNQNLANLVRLCLGKKLDKSNQFSNWAQRPLRKEQLRYAALDAFCLLEIYDAIEKQLTHIQLDPNEILNALLNDVRPPSDSGTRRAGRQDGSSGSRRNHRDKYNKRHAYAEDSNSGNSSRAHQNRTKSKGAGLREQQTFEGPNTKSVL.

The disordered stretch occupies residues 1–22 (MSKSNNVAPPCRQDQLGFVPAG). Positions 575–629 (NLANLVRLCLGKKLDKSNQFSNWAQRPLRKEQLRYAALDAFCLLEIYDAIEKQLT) constitute a 3'-5' exonuclease domain. Positions 644–719 (NDVRPPSDSG…FEGPNTKSVL (76 aa)) are disordered. The segment covering 667 to 678 (RRNHRDKYNKRH) has biased composition (basic residues). 2 stretches are compositionally biased toward polar residues: residues 683-692 (DSNSGNSSRA) and 706-719 (EQQT…KSVL).

This sequence belongs to the mut-7 family. It depends on Mg(2+) as a cofactor.

Its function is as follows. Possesses 3'-5' exoribonuclease activity. Required for 3'-end trimming of AGO1-bound miRNAs. The polypeptide is Exonuclease mut-7 homolog (Aedes aegypti (Yellowfever mosquito)).